Reading from the N-terminus, the 629-residue chain is Dual specificity tyrosine-phosphorylation-regulated kinase 1B (629 aa).

Residue Y63 is modified to Phosphotyrosine. Residues 67-86 form a disordered region; that stretch reads KKRRAQQAPPQDSSTKKEKK. Residues 69–86 carry the Bipartite nuclear localization signal motif; the sequence is RRAQQAPPQDSSTKKEKK. Phosphotyrosine occurs at positions 92 and 111. Positions 111–431 constitute a Protein kinase domain; the sequence is YEIDSLIGKG…PLGALQHGFF (321 aa). 117–125 is an ATP binding site; that stretch reads IGKGSFGQV. Y129 bears the Phosphotyrosine mark. Position 140 (K140) interacts with ATP. Phosphotyrosine is present on Y171. 190-193 is an ATP binding site; the sequence is FELL. Catalysis depends on D239, which acts as the Proton acceptor. S262 carries the phosphoserine modification. Position 271 is a phosphotyrosine; by autocatalysis (Y271). The residue at position 273 (Y273) is a Phosphotyrosine. The interval 380–399 is disordered; the sequence is GVQTGGPGGRRAGEPGHSPA. Y401 is modified (phosphotyrosine). 2 disordered regions span residues 436–480 and 496–629; these read DEAT…SNDN and PITD…AASS. Low complexity predominate over residues 438–477; sequence ATNTGPAGSSASTSPAPLDTCPSSSTASSISSSGGSSGSS. Positions 480-520 are interaction with RANBP9; the sequence is NRAYRYSNRYCGGPGPPITDCEMNSPQVLPSQPLRPWAGGD. Composition is skewed to pro residues over residues 552–562 and 574–585; these read PPSPTSPPPPE and DCSPPPPAPAPQ. Residue S624 is modified to Phosphoserine.

The protein belongs to the protein kinase superfamily. CMGC Ser/Thr protein kinase family. MNB/DYRK subfamily. As to quaternary structure, dimer. Interacts with DCOHM, MAP2K3/MKK3, RANBP9 and TCF1/HNF1A. Part of a complex consisting of RANBP9, RAN, DYRK1B and COPS5. Interacts with DCAF7. Interacts with RNF169. Phosphorylated by MAP kinase. Tyrosine phosphorylation may be required for dimerization. In terms of tissue distribution, isoform 1 and isoform 2 are broadly expressed. Isoform 3 seems specific for skeletal muscle (at protein level).

It localises to the nucleus. It is found in the nucleolus. The protein localises to the chromosome. The catalysed reaction is L-seryl-[protein] + ATP = O-phospho-L-seryl-[protein] + ADP + H(+). The enzyme catalyses L-threonyl-[protein] + ATP = O-phospho-L-threonyl-[protein] + ADP + H(+). It carries out the reaction L-tyrosyl-[protein] + ATP = O-phospho-L-tyrosyl-[protein] + ADP + H(+). With respect to regulation, inhibited by RANBP9. Functionally, dual-specificity kinase which possesses both serine/threonine and tyrosine kinase activities. Plays an essential role in ribosomal DNA (rDNA) double-strand break repair and rDNA copy number maintenance. During DNA damage, mediates transcription silencing in part via phosphorylating and enforcing DSB accumulation of the histone methyltransferase EHMT2. Enhances the transcriptional activity of TCF1/HNF1A and FOXO1. Inhibits epithelial cell migration. Mediates colon carcinoma cell survival in mitogen-poor environments. Inhibits the SHH and WNT1 pathways, thereby enhancing adipogenesis. In addition, promotes expression of the gluconeogenic enzyme glucose-6-phosphatase catalytic subunit 1 (G6PC1). This chain is Dual specificity tyrosine-phosphorylation-regulated kinase 1B (Dyrk1b), found in Mus musculus (Mouse).